We begin with the raw amino-acid sequence, 376 residues long: 23S rRNA (uracil(747)-C(5))-methyltransferase RlmC (376 aa).

Positions 3, 11, 14, and 87 each coordinate [4Fe-4S] cluster. S-adenosyl-L-methionine is bound by residues Q212, F241, E262, and N307. C334 acts as the Nucleophile in catalysis.

The protein belongs to the class I-like SAM-binding methyltransferase superfamily. RNA M5U methyltransferase family. RlmC subfamily.

It catalyses the reaction uridine(747) in 23S rRNA + S-adenosyl-L-methionine = 5-methyluridine(747) in 23S rRNA + S-adenosyl-L-homocysteine + H(+). In terms of biological role, catalyzes the formation of 5-methyl-uridine at position 747 (m5U747) in 23S rRNA. In Salmonella choleraesuis (strain SC-B67), this protein is 23S rRNA (uracil(747)-C(5))-methyltransferase RlmC.